A 190-amino-acid polypeptide reads, in one-letter code: Shikimate kinase (190 aa).

13-18 (GSGKTT) is an ATP binding site. T17 provides a ligand contact to Mg(2+). Substrate-binding residues include D35, R59, and G81. Residue R119 coordinates ATP. R138 contacts substrate. An ATP-binding site is contributed by Q155.

This sequence belongs to the shikimate kinase family. In terms of assembly, monomer. Mg(2+) is required as a cofactor.

The protein resides in the cytoplasm. It catalyses the reaction shikimate + ATP = 3-phosphoshikimate + ADP + H(+). The protein operates within metabolic intermediate biosynthesis; chorismate biosynthesis; chorismate from D-erythrose 4-phosphate and phosphoenolpyruvate: step 5/7. Functionally, catalyzes the specific phosphorylation of the 3-hydroxyl group of shikimic acid using ATP as a cosubstrate. The polypeptide is Shikimate kinase (Nitrosococcus oceani (strain ATCC 19707 / BCRC 17464 / JCM 30415 / NCIMB 11848 / C-107)).